A 651-amino-acid chain; its full sequence is Probable potassium transport system protein Kup (651 aa).

The span at 1 to 16 (MRDSPGSKSSSERWHD) shows a compositional bias: basic and acidic residues. Positions 1-31 (MRDSPGSKSSSERWHDTMAVSDPTAEGKDES) are disordered. A run of 12 helical transmembrane segments spans residues 38–58 (FWALTLGSVGVVFGDIGTSPL), 74–94 (VTPAIVLGVLSLILWSLFIVV), 129–149 (LLLLALGVVGASMFIGDSMIT), 168–188 (LQDYVVPLTLVILVMLFAVQS), 197–217 (AFAPVMALWFLTIAVLGVLHI), 232–252 (AIHFLLNHGLLGLVIMGLVFL), 276–296 (WFCLVLPSLLLNYFGQGALIL), 309–329 (LAPAPLILPLVILATAATVIA), 366–386 (IYLPRVNLLLLIGVLLLVLLF), 396–416 (YGIAVSTTMVADGIMGFVVVW), 423–443 (PAAAAALVVPLVVVDMMFFSA), and 448–468 (LFDGAWVPLLFGIAMVVLIWT).

This sequence belongs to the HAK/KUP transporter (TC 2.A.72) family.

The protein resides in the cell inner membrane. The catalysed reaction is K(+)(in) + H(+)(in) = K(+)(out) + H(+)(out). Its function is as follows. Transport of potassium into the cell. Likely operates as a K(+):H(+) symporter. The polypeptide is Probable potassium transport system protein Kup (Nitrobacter winogradskyi (strain ATCC 25391 / DSM 10237 / CIP 104748 / NCIMB 11846 / Nb-255)).